We begin with the raw amino-acid sequence, 98 residues long: YcgL domain-containing protein CJA_2437 (98 aa).

Positions 3–87 (IIAEIYRSPK…RDLVDAEAKR (85 aa)) constitute a YcgL domain.

The sequence is that of YcgL domain-containing protein CJA_2437 from Cellvibrio japonicus (strain Ueda107) (Pseudomonas fluorescens subsp. cellulosa).